The primary structure comprises 264 residues: MRILLTNDDGIYAPGIKALRQVLEKEGKYELTVVAPDREKSATGHGITVHRPLRAFDITFKNSKVRGVSVDGTPADCVKLAVEALLDKPPDLVLSGINSGPNLGTDVLYSGTVSAAIEAMINGIPAIAISMGSFAFEDEEYLRAAEIFARLLPRILEHPWPRDTILNINIPNVPLEEIKGIAITRLGVRKYINVFEERKDPRGLSYYWMSGEAVNYENGQDTDTAALARKEISITPVHFDLTNYHYLNELKTWVKALEGALATG.

A divalent metal cation contacts are provided by Asp-8, Asp-9, Ser-41, and Asn-98.

It belongs to the SurE nucleotidase family. It depends on a divalent metal cation as a cofactor.

The protein localises to the cytoplasm. The catalysed reaction is a ribonucleoside 5'-phosphate + H2O = a ribonucleoside + phosphate. Nucleotidase that shows phosphatase activity on nucleoside 5'-monophosphates. The protein is 5'-nucleotidase SurE of Carboxydothermus hydrogenoformans (strain ATCC BAA-161 / DSM 6008 / Z-2901).